We begin with the raw amino-acid sequence, 176 residues long: MFPMVTGFMNYGQQTVRAARYIGQSFMTTLSHVNRLPVTIQYPYEKLITSERFRGRIHFEFDKCIACEVCVRVCPIDLPVVDWELETNIRKKRLLNYSIDFGICIFCGNCVEYCPTNCLSMTEEYELSTYNRHELNYNQIALGRLPMSVIDDYTIRTILNSPQSLIKMVKPPLIKD.

4Fe-4S ferredoxin-type domains are found at residues 55–84 and 95–124; these read GRIH…VDWE and LNYS…MTEE. [4Fe-4S] cluster-binding residues include Cys-64, Cys-67, Cys-70, Cys-74, Cys-104, Cys-107, Cys-110, and Cys-114.

Belongs to the complex I 23 kDa subunit family. In terms of assembly, NDH is composed of at least 16 different subunits, 5 of which are encoded in the nucleus. [4Fe-4S] cluster serves as cofactor.

It localises to the plastid. The protein localises to the chloroplast thylakoid membrane. The catalysed reaction is a plastoquinone + NADH + (n+1) H(+)(in) = a plastoquinol + NAD(+) + n H(+)(out). It carries out the reaction a plastoquinone + NADPH + (n+1) H(+)(in) = a plastoquinol + NADP(+) + n H(+)(out). In terms of biological role, NDH shuttles electrons from NAD(P)H:plastoquinone, via FMN and iron-sulfur (Fe-S) centers, to quinones in the photosynthetic chain and possibly in a chloroplast respiratory chain. The immediate electron acceptor for the enzyme in this species is believed to be plastoquinone. Couples the redox reaction to proton translocation, and thus conserves the redox energy in a proton gradient. The protein is NAD(P)H-quinone oxidoreductase subunit I, chloroplastic of Populus trichocarpa (Western balsam poplar).